Consider the following 319-residue polypeptide: Phospho-N-acetylmuramoyl-pentapeptide-transferase (319 aa).

Helical transmembrane passes span Leu-5–Trp-25, Thr-51–Tyr-71, Val-79–Leu-99, Leu-119–Tyr-139, Val-149–Leu-169, Leu-173–Phe-193, Asn-197–Phe-217, Ile-224–Gly-246, and Val-299–Gly-319.

It belongs to the glycosyltransferase 4 family. MraY subfamily. Mg(2+) is required as a cofactor.

It is found in the cell membrane. It catalyses the reaction UDP-N-acetyl-alpha-D-muramoyl-L-alanyl-gamma-D-glutamyl-L-lysyl-D-alanyl-D-alanine + di-trans,octa-cis-undecaprenyl phosphate = Mur2Ac(oyl-L-Ala-gamma-D-Glu-L-Lys-D-Ala-D-Ala)-di-trans,octa-cis-undecaprenyl diphosphate + UMP. It participates in cell wall biogenesis; peptidoglycan biosynthesis. Functionally, catalyzes the initial step of the lipid cycle reactions in the biosynthesis of the cell wall peptidoglycan: transfers peptidoglycan precursor phospho-MurNAc-pentapeptide from UDP-MurNAc-pentapeptide onto the lipid carrier undecaprenyl phosphate, yielding undecaprenyl-pyrophosphoryl-MurNAc-pentapeptide, known as lipid I. The chain is Phospho-N-acetylmuramoyl-pentapeptide-transferase from Lactobacillus delbrueckii subsp. bulgaricus (strain ATCC BAA-365 / Lb-18).